The sequence spans 535 residues: Putative subtilisin-like proteinase 2 (535 aa).

The N-terminal stretch at 1-17 (MFFVGVAVLAALQSVWG) is a signal peptide. Residues 221–475 (NWIFRVLQIK…IPRLGCKGRI (255 aa)) enclose the Peptidase S8 domain. Catalysis depends on charge relay system residues aspartate 255 and histidine 277. A disulfide bridge connects residues cysteine 369 and cysteine 400. The active-site Charge relay system is serine 420. Residues 489 to 509 (IVPLVFVVLITSALLYLLLIG) traverse the membrane as a helical segment.

Belongs to the peptidase S8 family.

The protein resides in the membrane. In terms of biological role, may be involved in the degradation of proteins for nutrient acquisition or possess a regulatory function by proteolytic activation of proproteins. This chain is Putative subtilisin-like proteinase 2 (SPL2), found in Encephalitozoon cuniculi (strain GB-M1) (Microsporidian parasite).